The chain runs to 100 residues: Urease subunit gamma (100 aa).

The protein belongs to the urease gamma subunit family. As to quaternary structure, heterotrimer of UreA (gamma), UreB (beta) and UreC (alpha) subunits. Three heterotrimers associate to form the active enzyme.

The protein resides in the cytoplasm. The enzyme catalyses urea + 2 H2O + H(+) = hydrogencarbonate + 2 NH4(+). The protein operates within nitrogen metabolism; urea degradation; CO(2) and NH(3) from urea (urease route): step 1/1. This chain is Urease subunit gamma, found in Acinetobacter baumannii (strain AB307-0294).